A 172-amino-acid chain; its full sequence is RNA silencing suppressor p19 (172 aa).

A compositionally biased stretch (basic and acidic residues) spans 1-20 (MERAIQGNDAREQANSERWD). The disordered stretch occupies residues 1-37 (MERAIQGNDAREQANSERWDGGSGGTTSPFKLPDESP).

The protein belongs to the tombusvirus protein p19 family. Homodimer.

Viral suppressor of RNA silencing which binds specifically to silencing RNAs (siRNAs). Acts as a molecular caliper to specifically select siRNAs based on the length of the duplex region of the RNA. This is RNA silencing suppressor p19 from Tomato bushy stunt virus (strain Ja6) (TBSV).